Consider the following 729-residue polypeptide: MSSRPLLKLALSLHDRLDELCSRGQIALVGYGLDVAAVAAVARHECFPIVDDEEVIARLNESTEILERSCRGSTMIYGVHTGFGGSADTRPDDSSGLGRGLMQLLQTGVLVVENLNISGPSTPQIMMPQSMPSSWTKATTAVRINQCVRGHSAIRHQTVKSLLKLVATQITPIVPLRGSISASGDLMPLSYIAGTLEGSPDIYVTKGSGKSAKIISAHEALGEIGMKPLLLGPREGLGLVNGTATSAATASLAVLDAIQLTLLSTGLTCLVSEGMAARVEWLHPFIAETRPHPGQGEVAAIMRAFLKGSRLVSGLEGEANAHLHTLNVRPDEGLPQDRYPLRTSPQWLGPQFEDLLLAHSQITIELNSTSDNPLTNLKTGAMHHGGNFQATSITSAVEKIRTSLQMVGKLLFSQCTEMINHQMNAGLPPNLAADDPSASFCCKGLDINIAAYQSELSYLSNSISNHVQSAEMHNQAVNSLAFLSTRYTIKAIELLGMMVAGVLYAACQAMDLRVMHATFLDTTTSTLQKAIADLLPNGFKSDDVEKSLATAVQGLRNAWWNNAGSDASERCSITAIAFVQVLCDPSKYHTDTHKEDICLDLTAKEMRQLQDDVRLHLSKAYHKHHSAFLEKPTTEEYIGKGSKALYLWTRQDLGIPMNRGLIDHPSPENLKEPGSVGKRTIGSYVSMIYQGIQDGRLFKRFATASREVGLGDGGVNGTRKRAYADYETP.

The active-site Proton donor/acceptor is the Tyr77. The 5-imidazolinone (Ala-Gly) cross-link spans Ala182–Gly184. Ser183 carries the post-translational modification 2,3-didehydroalanine (Ser). Residues Asn241, Gln336, Arg342, Asn372, Lys443, Glu471, and Asn474 each contribute to the (E)-cinnamate site.

The protein belongs to the PAL/histidase family. Post-translationally, contains an active site 4-methylidene-imidazol-5-one (MIO), which is formed autocatalytically by cyclization and dehydration of residues Ala-Ser-Gly.

It localises to the cytoplasm. It catalyses the reaction L-phenylalanine = (E)-cinnamate + NH4(+). Its pathway is secondary metabolite biosynthesis. The protein operates within phenylpropanoid metabolism; trans-cinnamate biosynthesis; trans-cinnamate from L-phenylalanine: step 1/1. Functionally, phenylalanine ammonia-lyase; part of the gene cluster that mediates the biosynthesis of squalestatin S1 (SQS1, also known as zaragozic acid A), a heavily oxidized fungal polyketide that offers potent cholesterol lowering activity by targeting squalene synthase (SS). SQS1 is composed of a 2,8-dioxobicyclic[3.2.1]octane-3,4,5-tricarboxyclic acid core that is connected to two lipophilic polyketide arms. These initial steps feature the priming of an unusual benzoic acid starter unit onto the highly reducing polyketide synthase pks2, followed by oxaloacetate extension and product release to generate a tricarboxylic acid containing product. The phenylalanine ammonia lyase (PAL) M7 and the acyl-CoA ligase M9 are involved in transforming phenylalanine into benzoyl-CoA. The citrate synthase-like protein R3 is involved in connecting the C-alpha-carbons of the hexaketide chain and oxaloacetate to afford the tricarboxylic acid unit. The potential hydrolytic enzymes, M8 and M10, are in close proximity to pks2 and may participate in product release. On the other side, the tetraketide arm is synthesized by a the squalestatin tetraketide synthase pks1 and enzymatically esterified to the core in the last biosynthetic step, by the acetyltransferase M4. The biosynthesis of the tetraketide must involve 3 rounds of chain extension. After the first and second rounds methyl-transfer occurs, and in all rounds of extension the ketoreductase and dehydratase are active. The enoyl reductase and C-MeT of pks1 are not active in the final round of extension. The acetyltransferase M4 appears to have a broad substrate selectivity for its acyl CoA substrate, allowing the in vitro synthesis of novel squalestatins. The biosynthesis of SQS1 requires several oxidative steps likely performed by oxidoreductases M1, R1 and R2. Finally, in support of the identification of the cluster as being responsible for SQS1 production, the cluster contains a gene encoding a putative squalene synthase (SS) R6, suggesting a likely mechanism for self-resistance. In Phoma sp. (strain ATCC 20986 / MF5453), this protein is Phenylalanine ammonia-lyase.